We begin with the raw amino-acid sequence, 172 residues long: Putative Dresden prostate carcinoma protein 2 (172 aa).

The tract at residues 40 to 61 is disordered; that stretch reads QCEEEEAMTPRPTKARAPLPSA.

Very high expression in prostate and prostate cancer. Faint expression in other tissues.

In Homo sapiens (Human), this protein is Putative Dresden prostate carcinoma protein 2 (HMGN2P46).